Reading from the N-terminus, the 101-residue chain is Ascorbate-specific PTS system EIIB component (101 aa).

A PTS EIIB type-2 domain is found at 3–96 (VRILAVCGNG…KLLEVIKAHF (94 aa)). Cys9 (phosphocysteine intermediate) is an active-site residue. Position 9 is a phosphocysteine (Cys9).

The protein localises to the cytoplasm. The catalysed reaction is N(pros)-phospho-L-histidyl-[protein] + L-ascorbate(out) = L-ascorbate 6-phosphate(in) + L-histidyl-[protein]. In terms of biological role, the phosphoenolpyruvate-dependent sugar phosphotransferase system (sugar PTS), a major carbohydrate active transport system, catalyzes the phosphorylation of incoming sugar substrates concomitantly with their translocation across the cell membrane. The enzyme II UlaABC PTS system is involved in ascorbate transport. The sequence is that of Ascorbate-specific PTS system EIIB component (ulaB) from Shigella sonnei (strain Ss046).